The chain runs to 59 residues: Large ribosomal subunit protein eL37 (59 aa).

Zn(2+) is bound by residues Cys-20, Cys-23, Cys-35, and Cys-38. Residues 20 to 38 (CRRCGRHSFHRRKGYCAAC) form a C4-type zinc finger.

The protein belongs to the eukaryotic ribosomal protein eL37 family. The cofactor is Zn(2+).

Functionally, binds to the 23S rRNA. This chain is Large ribosomal subunit protein eL37 (rpl37e), found in Archaeoglobus fulgidus (strain ATCC 49558 / DSM 4304 / JCM 9628 / NBRC 100126 / VC-16).